The sequence spans 486 residues: 2-succinylbenzoate--CoA ligase (486 aa).

It belongs to the ATP-dependent AMP-binding enzyme family. MenE subfamily.

The catalysed reaction is 2-succinylbenzoate + ATP + CoA = 2-succinylbenzoyl-CoA + AMP + diphosphate. It participates in quinol/quinone metabolism; 1,4-dihydroxy-2-naphthoate biosynthesis; 1,4-dihydroxy-2-naphthoate from chorismate: step 5/7. The protein operates within quinol/quinone metabolism; menaquinone biosynthesis. Its function is as follows. Converts 2-succinylbenzoate (OSB) to 2-succinylbenzoyl-CoA (OSB-CoA). In Bacillus subtilis (strain 168), this protein is 2-succinylbenzoate--CoA ligase.